Reading from the N-terminus, the 607-residue chain is Arginine decarboxylase (607 aa).

Lys-104 carries the post-translational modification N6-(pyridoxal phosphate)lysine. 290–300 contributes to the substrate binding site; that stretch reads LDCGGGLGVDY.

Belongs to the Orn/Lys/Arg decarboxylase class-II family. SpeA subfamily. The cofactor is pyridoxal 5'-phosphate. Requires Mg(2+) as cofactor.

It carries out the reaction L-arginine + H(+) = agmatine + CO2. It functions in the pathway amine and polyamine biosynthesis; agmatine biosynthesis; agmatine from L-arginine: step 1/1. In Avena sativa (Oat), this protein is Arginine decarboxylase (SPE1).